The sequence spans 416 residues: Squamosa promoter-binding-like protein 8 (416 aa).

Positions 11-51 are disordered; it reads SSCDDFGYNATPPPPPSLLPIMDQDGGGGSIQRDHHQHHNH. The SBP-type zinc-finger motif lies at 182–260; sequence PPRCQAEGCK…ADHNRRRRKS (79 aa). Zn(2+) contacts are provided by C185, C190, C207, H210, C227, C230, H234, and C246. Positions 243–259 match the Bipartite nuclear localization signal motif; the sequence is KKSCRKRLADHNRRRRK. Positions 250–299 are disordered; sequence LADHNRRRRKSKPSDGEHSGEKRRAQANKSAATKDKAGSSSKNAGIGDGF. Positions 261–273 are enriched in basic and acidic residues; that stretch reads KPSDGEHSGEKRR.

As to expression, expressed in stems, leaf sheaths, and young panicles. Weakly expressed in ligules, auricles, and leaf sheaths at the basal region.

The protein resides in the nucleus. Probable transcription factor that plays an important role in building the laminar joint between leaf blade and leaf sheath boundary, thereby controlling ligule and auricle development. The chain is Squamosa promoter-binding-like protein 8 (SPL8) from Oryza sativa subsp. japonica (Rice).